Consider the following 380-residue polypeptide: Chaperone protein DnaJ (380 aa).

One can recognise a J domain in the interval 6–71 (DYYESLEVSR…QKRAAYDRYG (66 aa)). The CR-type zinc finger occupies 136–215 (GVTKDVEVRT…CHGTGTEAKT (80 aa)). 8 residues coordinate Zn(2+): Cys-149, Cys-152, Cys-167, Cys-170, Cys-189, Cys-192, Cys-203, and Cys-206. CXXCXGXG motif repeat units follow at residues 149-156 (CEACHGSG), 167-174 (CPTCHGAG), 189-196 (CPTCHGSG), and 203-210 (CKVCHGTG).

The protein belongs to the DnaJ family. As to quaternary structure, homodimer. Zn(2+) serves as cofactor.

It localises to the cytoplasm. Functionally, participates actively in the response to hyperosmotic and heat shock by preventing the aggregation of stress-denatured proteins and by disaggregating proteins, also in an autonomous, DnaK-independent fashion. Unfolded proteins bind initially to DnaJ; upon interaction with the DnaJ-bound protein, DnaK hydrolyzes its bound ATP, resulting in the formation of a stable complex. GrpE releases ADP from DnaK; ATP binding to DnaK triggers the release of the substrate protein, thus completing the reaction cycle. Several rounds of ATP-dependent interactions between DnaJ, DnaK and GrpE are required for fully efficient folding. Also involved, together with DnaK and GrpE, in the DNA replication of plasmids through activation of initiation proteins. The sequence is that of Chaperone protein DnaJ from Gluconobacter oxydans (strain 621H) (Gluconobacter suboxydans).